A 343-amino-acid chain; its full sequence is Transmembrane protein 120A (343 aa).

Residues 1-135 (MQSPPPDPLG…KFAYKDEYEK (135 aa)) are Cytoplasmic-facing. K130 contributes to the CoA binding site. Residues 136–156 (FKLYLTIILIVISFTCRFLLN) traverse the membrane as a helical segment. Over 157–162 (SRVTDA) the chain is Extracellular. A helical transmembrane segment spans residues 163-183 (AFNFLLVWYYCTLTIRESILI). The Cytoplasmic portion of the chain corresponds to 184–190 (NNGSRIK). CoA-binding residues include S187 and R188. Residues 191–211 (GWWVFHHYVSTFLSGVMLTWP) form a helical membrane-spanning segment. At 212 to 222 (DGLMYQKFRNQ) the chain is on the extracellular side. Residues 223-240 (FLSFSMYQSFVQFLQYYY) traverse the membrane as a helical segment. Positions 237, 240, 241, and 283 each coordinate CoA. Residues 241–273 (QSGCLYRLRALGERHTMDLTVEGFQSWMWRGLT) lie on the Cytoplasmic side of the membrane. A helical membrane pass occupies residues 274 to 294 (FLLPFLFFGHFWQLFNALTLF). Residues 295-305 (NLARDPECKEW) are Extracellular-facing. Residues 306 to 326 (QVLMCGFPFLLLFLGNFFTTL) form a helical membrane-spanning segment. Over 327–343 (RVVHQKFHSQQHGNKKD) the chain is Cytoplasmic. K332 lines the CoA pocket.

Belongs to the TMEM120 family. Homodimer. Forms heterooligomer with TMEM120B. Interacts with PKD2; TMEM120A inhibits PKD2 channel activity through the physical association of PKD2 with TMEM120A. In terms of tissue distribution, widely expressed, with higher expression in the heart, kidneys, colon and sensory neurons of the dorsal root ganglia. Expressed in nociceptors. Highly expressed in white adipose tissue (at protein level). Highly expressed in brown adipose tissue and expressed at low levels in liver.

It localises to the cell membrane. The protein localises to the nucleus envelope. It is found in the nucleus inner membrane. Its subcellular location is the endoplasmic reticulum. Its function is as follows. Multifunctional protein involved in mechanosensation, and plays an essential role in lipid metabolism and adipocyte differentiation. May function as a potential ion channel involved in sensing mechanical stimuli. Mediates the mechanosensitivity of the PKD2-TMEM120A channel complex through direct physical interaction. TMEM120A seems to affect mechanosensation by inhibiting PIEZO2 channels, possibly by altering cellular lipid content. TMEM120A is structurally similar to a lipid-modifying enzyme, ELOVL7, and contains a bound coenzyme A molecule, which suggests it might function as an enzyme in lipid metabolism. In Mus musculus (Mouse), this protein is Transmembrane protein 120A.